Here is an 869-residue protein sequence, read N- to C-terminus: Bifunctional uridylyltransferase/uridylyl-removing enzyme (869 aa).

The interval 1-332 (MTDTPAERPD…QFDGEATPEP (332 aa)) is uridylyltransferase. The uridylyl-removing stretch occupies residues 333 to 691 (LGGGFSLRRG…RRAVPDNDAL (359 aa)). One can recognise an HD domain in the interval 450–572 (VDQHTLMVLR…VGTRERLDYL (123 aa)). ACT domains lie at 692 to 774 (EVFV…RAVP) and 798 to 869 (RISL…LDPV).

It belongs to the GlnD family. It depends on Mg(2+) as a cofactor.

It catalyses the reaction [protein-PII]-L-tyrosine + UTP = [protein-PII]-uridylyl-L-tyrosine + diphosphate. It carries out the reaction [protein-PII]-uridylyl-L-tyrosine + H2O = [protein-PII]-L-tyrosine + UMP + H(+). Its activity is regulated as follows. Uridylyltransferase (UTase) activity is inhibited by glutamine, while glutamine activates uridylyl-removing (UR) activity. Modifies, by uridylylation and deuridylylation, the PII regulatory proteins (GlnB and homologs), in response to the nitrogen status of the cell that GlnD senses through the glutamine level. Under low glutamine levels, catalyzes the conversion of the PII proteins and UTP to PII-UMP and PPi, while under higher glutamine levels, GlnD hydrolyzes PII-UMP to PII and UMP (deuridylylation). Thus, controls uridylylation state and activity of the PII proteins, and plays an important role in the regulation of nitrogen assimilation and metabolism. The polypeptide is Bifunctional uridylyltransferase/uridylyl-removing enzyme (Xanthomonas axonopodis pv. citri (strain 306)).